We begin with the raw amino-acid sequence, 199 residues long: uncharacterized protein (199 aa).

Residues 1 to 30 are disordered; that stretch reads MEDAAAPGRTEGVLERQGAPPAAGQGGALV. Residues 71 to 101 are a coiled coil; it reads RANATNKLTVIAEQIQHLQEQARKVLEDAHR.

This is an uncharacterized protein from Homo sapiens (Human).